A 1373-amino-acid polypeptide reads, in one-letter code: DNA-directed RNA polymerase subunit beta (1373 aa).

This sequence belongs to the RNA polymerase beta chain family. In terms of assembly, the RNAP catalytic core consists of 2 alpha, 1 beta, 1 beta' and 1 omega subunit. When a sigma factor is associated with the core the holoenzyme is formed, which can initiate transcription.

The catalysed reaction is RNA(n) + a ribonucleoside 5'-triphosphate = RNA(n+1) + diphosphate. DNA-dependent RNA polymerase catalyzes the transcription of DNA into RNA using the four ribonucleoside triphosphates as substrates. The polypeptide is DNA-directed RNA polymerase subunit beta (Rickettsia peacockii (strain Rustic)).